A 348-amino-acid chain; its full sequence is tRNA pseudouridine synthase B (348 aa).

Asp52 functions as the Nucleophile in the catalytic mechanism.

It belongs to the pseudouridine synthase TruB family. Type 1 subfamily.

It carries out the reaction uridine(55) in tRNA = pseudouridine(55) in tRNA. Responsible for synthesis of pseudouridine from uracil-55 in the psi GC loop of transfer RNAs. The sequence is that of tRNA pseudouridine synthase B from Rhodopirellula baltica (strain DSM 10527 / NCIMB 13988 / SH1).